An 85-amino-acid chain; its full sequence is U4-theraphotoxin-Hhn1u (85 aa).

Residues 1–22 (MKMTLIAILTCAAVLVLHTTAA) form the signal peptide. Positions 23–48 (EELEAESQLMEVGMPDTELEAVDEER) are excised as a propeptide. 3 disulfides stabilise this stretch: Cys52–Cys66, Cys56–Cys77, and Cys71–Cys82.

The protein belongs to the neurotoxin 12 (Hwtx-2) family. 02 (Hwtx-2) subfamily. In terms of tissue distribution, expressed by the venom gland.

Its subcellular location is the secreted. Postsynaptic neurotoxin. This Cyriopagopus hainanus (Chinese bird spider) protein is U4-theraphotoxin-Hhn1u.